Reading from the N-terminus, the 2345-residue chain is Acetyl-CoA carboxylase 1 (2345 aa).

Methionine 1 is modified (N-acetylmethionine). Serine 5, serine 23, serine 25, serine 29, serine 34, serine 47, serine 49, and serine 52 each carry phosphoserine. Residue threonine 57 is modified to Phosphothreonine. A phosphoserine mark is found at serine 77 and serine 79. Serine 79 is subject to Phosphoserine; by AMPK. Residues 116-617 enclose the Biotin carboxylation domain; that stretch reads VIEKVLIANN…DTGWLDRLIA (502 aa). Positions 274 to 465 constitute an ATP-grasp domain; it reads SKRILNVPQD…LPAAQLQIAM (192 aa). 300–357 is a binding site for ATP; sequence AEEVGYPVMIKASEGGGGKGIRKVNNADDFPNLFRQVQAEVPGSPIFVMRLAKQSRHL. Residues glutamate 423, glutamate 436, and asparagine 438 each contribute to the Mg(2+) site. Mn(2+)-binding residues include glutamate 423, glutamate 436, and asparagine 438. Residue arginine 440 is part of the active site. Threonine 609 is modified (phosphothreonine). The Biotinyl-binding domain occupies 744 to 818; the sequence is FEKENDPSVM…DPGCVIAKMQ (75 aa). Residue lysine 785 is modified to N6-biotinyllysine. 4 positions are modified to phosphoserine: serine 834, serine 1200, serine 1215, and serine 1217. Threonine 1226 bears the Phosphothreonine mark. Serine 1258, serine 1262, and serine 1272 each carry phosphoserine. An N6-acetyllysine modification is found at lysine 1333. Residues 1575–1913 form the CoA carboxyltransferase N-terminal domain; it reads PYVTKDLLQS…SVHSSVPLLN (339 aa). Residues 1575-2233 form a carboxyltransferase region; it reads PYVTKDLLQS…EDLVKKKIHN (659 aa). Arginine 1822, lysine 2126, and arginine 2128 together coordinate CoA. Positions 1917–2233 constitute a CoA carboxyltransferase C-terminal domain; the sequence is PIDRIIEFVP…EDLVKKKIHN (317 aa). Threonine 2152 carries the post-translational modification Phosphothreonine.

As to quaternary structure, monomer, homodimer, and homotetramer. Can form filamentous polymers. Interacts in its inactive phosphorylated form with the BRCT domains of BRCA1 which prevents ACACA dephosphorylation and inhibits lipid synthesis. Interacts with MID1IP1; interaction with MID1IP1 promotes oligomerization and increases its activity. Requires Mg(2+) as cofactor. Mn(2+) serves as cofactor. Biotin is required as a cofactor. Phosphorylation on Ser-1262 is required for interaction with BRCA1. In terms of processing, phosphorylation at Ser-79 by AMPK inactivates enzyme activity. Post-translationally, the biotin cofactor is covalently attached to the central biotinyl-binding domain and is required for the catalytic activity.

It is found in the cytoplasm. The protein localises to the cytosol. It catalyses the reaction hydrogencarbonate + acetyl-CoA + ATP = malonyl-CoA + ADP + phosphate + H(+). It functions in the pathway lipid metabolism; malonyl-CoA biosynthesis; malonyl-CoA from acetyl-CoA: step 1/1. With respect to regulation, inhibited by phosphorylation. Citrate promotes oligomerization of the protein into filaments that correspond to the most active form of the carboxylase. Functionally, cytosolic enzyme that catalyzes the carboxylation of acetyl-CoA to malonyl-CoA, the first and rate-limiting step of de novo fatty acid biosynthesis. This is a 2 steps reaction starting with the ATP-dependent carboxylation of the biotin carried by the biotin carboxyl carrier (BCC) domain followed by the transfer of the carboxyl group from carboxylated biotin to acetyl-CoA. The protein is Acetyl-CoA carboxylase 1 of Mus musculus (Mouse).